Consider the following 686-residue polypeptide: Methionine--tRNA ligase (686 aa).

The 'HIGH' region signature appears at 15 to 25; it reads PYTNGPIHIGH. Zn(2+) contacts are provided by Cys147, Cys150, Cys160, and Cys163. Residues 336–340 carry the 'KMSKS' region motif; that stretch reads KLSTS. An ATP-binding site is contributed by Thr339. One can recognise a tRNA-binding domain in the interval 584–686; sequence DFAKMDLRVG…AGVGNGEGIN (103 aa).

This sequence belongs to the class-I aminoacyl-tRNA synthetase family. MetG type 1 subfamily. As to quaternary structure, homodimer. Zn(2+) is required as a cofactor.

Its subcellular location is the cytoplasm. It catalyses the reaction tRNA(Met) + L-methionine + ATP = L-methionyl-tRNA(Met) + AMP + diphosphate. Is required not only for elongation of protein synthesis but also for the initiation of all mRNA translation through initiator tRNA(fMet) aminoacylation. The protein is Methionine--tRNA ligase of Flavobacterium psychrophilum (strain ATCC 49511 / DSM 21280 / CIP 103535 / JIP02/86).